Reading from the N-terminus, the 474-residue chain is Aspartyl/glutamyl-tRNA(Asn/Gln) amidotransferase subunit B (474 aa).

The protein belongs to the GatB/GatE family. GatB subfamily. In terms of assembly, heterotrimer of A, B and C subunits.

The catalysed reaction is L-glutamyl-tRNA(Gln) + L-glutamine + ATP + H2O = L-glutaminyl-tRNA(Gln) + L-glutamate + ADP + phosphate + H(+). It catalyses the reaction L-aspartyl-tRNA(Asn) + L-glutamine + ATP + H2O = L-asparaginyl-tRNA(Asn) + L-glutamate + ADP + phosphate + 2 H(+). Its function is as follows. Allows the formation of correctly charged Asn-tRNA(Asn) or Gln-tRNA(Gln) through the transamidation of misacylated Asp-tRNA(Asn) or Glu-tRNA(Gln) in organisms which lack either or both of asparaginyl-tRNA or glutaminyl-tRNA synthetases. The reaction takes place in the presence of glutamine and ATP through an activated phospho-Asp-tRNA(Asn) or phospho-Glu-tRNA(Gln). The chain is Aspartyl/glutamyl-tRNA(Asn/Gln) amidotransferase subunit B from Limosilactobacillus reuteri (strain DSM 20016) (Lactobacillus reuteri).